The primary structure comprises 229 residues: 7-cyano-7-deazaguanine synthase (229 aa).

Residue 8–18 (FSGGQDSTTCL) coordinates ATP. Residues Cys-187, Cys-196, Cys-199, and Cys-202 each contribute to the Zn(2+) site.

The protein belongs to the QueC family. It depends on Zn(2+) as a cofactor.

The enzyme catalyses 7-carboxy-7-deazaguanine + NH4(+) + ATP = 7-cyano-7-deazaguanine + ADP + phosphate + H2O + H(+). Its pathway is purine metabolism; 7-cyano-7-deazaguanine biosynthesis. Functionally, catalyzes the ATP-dependent conversion of 7-carboxy-7-deazaguanine (CDG) to 7-cyano-7-deazaguanine (preQ(0)). This chain is 7-cyano-7-deazaguanine synthase, found in Shewanella halifaxensis (strain HAW-EB4).